The following is a 442-amino-acid chain: tRNA modification GTPase MnmE (442 aa).

(6S)-5-formyl-5,6,7,8-tetrahydrofolate-binding residues include arginine 27, glutamate 84, and lysine 124. Positions 221-366 constitute a TrmE-type G domain; it reads GLHVVIVGAP…LLDALQAFAE (146 aa). GTP is bound by residues 231 to 236, 250 to 256, and 275 to 278; these read NAGKSS, SEEAGTT, and DTAG. Serine 235 and threonine 256 together coordinate Mg(2+). A (6S)-5-formyl-5,6,7,8-tetrahydrofolate-binding site is contributed by lysine 442.

The protein belongs to the TRAFAC class TrmE-Era-EngA-EngB-Septin-like GTPase superfamily. TrmE GTPase family. Homodimer. Heterotetramer of two MnmE and two MnmG subunits. Requires K(+) as cofactor.

Its subcellular location is the cytoplasm. Exhibits a very high intrinsic GTPase hydrolysis rate. Involved in the addition of a carboxymethylaminomethyl (cmnm) group at the wobble position (U34) of certain tRNAs, forming tRNA-cmnm(5)s(2)U34. The polypeptide is tRNA modification GTPase MnmE (Brucella abortus (strain 2308)).